The following is a 326-amino-acid chain: Eukaryotic translation initiation factor 3 subunit I (326 aa).

WD repeat units lie at residues 8–47 (GHERSITQIKYNREGDLLFSSSKDQKPNVWYSLNGERLGT), 50–89 (GHQGAVWCLDVDWESRKLITGAGDMTTKLWDVEYGTVIAS), 145–184 (MVESKITSMQWGPLDETIITGHDNGNIAIWDVRKGQKVVD), 188–227 (DHAAGINDMQLSKDGTMFVTASKDNTAKLFDAESLMCLKT), and 285–326 (GHFG…NIFE).

This sequence belongs to the eIF-3 subunit I family. As to quaternary structure, component of the eukaryotic translation initiation factor 3 (eIF-3) complex. The eIF-3 complex interacts with pix.

Its subcellular location is the cytoplasm. Its function is as follows. Component of the eukaryotic translation initiation factor 3 (eIF-3) complex, which is involved in protein synthesis of a specialized repertoire of mRNAs and, together with other initiation factors, stimulates binding of mRNA and methionyl-tRNAi to the 40S ribosome. The eIF-3 complex specifically targets and initiates translation of a subset of mRNAs involved in cell proliferation. The chain is Eukaryotic translation initiation factor 3 subunit I from Drosophila grimshawi (Hawaiian fruit fly).